The primary structure comprises 407 residues: Peptidase T (407 aa).

His-82 provides a ligand contact to Zn(2+). Residue Asp-84 is part of the active site. Asp-143 contacts Zn(2+). Residue Glu-177 is the Proton acceptor of the active site. Residues Glu-178, Asp-200, and His-382 each contribute to the Zn(2+) site.

The protein belongs to the peptidase M20B family. Zn(2+) is required as a cofactor.

Its subcellular location is the cytoplasm. The enzyme catalyses Release of the N-terminal residue from a tripeptide.. Functionally, cleaves the N-terminal amino acid of tripeptides. This chain is Peptidase T, found in Streptococcus pyogenes serotype M4 (strain MGAS10750).